The chain runs to 347 residues: UDP-N-acetylenolpyruvoylglucosamine reductase (347 aa).

Residues 15–187 (FGIEQTCSYL…TAIGLKLPKR (173 aa)) form the FAD-binding PCMH-type domain. The active site involves Arg-163. Ser-233 serves as the catalytic Proton donor. Glu-328 is an active-site residue.

The protein belongs to the MurB family. Requires FAD as cofactor.

The protein resides in the cytoplasm. The enzyme catalyses UDP-N-acetyl-alpha-D-muramate + NADP(+) = UDP-N-acetyl-3-O-(1-carboxyvinyl)-alpha-D-glucosamine + NADPH + H(+). The protein operates within cell wall biogenesis; peptidoglycan biosynthesis. Its function is as follows. Cell wall formation. The sequence is that of UDP-N-acetylenolpyruvoylglucosamine reductase from Vibrio parahaemolyticus serotype O3:K6 (strain RIMD 2210633).